Reading from the N-terminus, the 311-residue chain is Olfactory receptor 1073 (311 aa).

Residues 1-25 lie on the Extracellular side of the membrane; the sequence is MKQQNDTQILQFLLLGLSENTELQP. Residue Asn5 is glycosylated (N-linked (GlcNAc...) asparagine). The helical transmembrane segment at 26 to 46 threads the bilayer; the sequence is LIYWLFFSMYLVTVWGNLIII. Residues 47 to 57 lie on the Cytoplasmic side of the membrane; the sequence is LATVLDFRLHT. The chain crosses the membrane as a helical span at residues 58–78; the sequence is AMYFFLCNLSFVDICLISTTI. Residues 79–97 are Extracellular-facing; sequence PKMLANVHLNHKAITYEGC. An intrachain disulfide couples Cys97 to Cys179. A helical transmembrane segment spans residues 98-118; sequence IMQIYFFTLFVGLDNFLLAVM. Over 119–133 the chain is Cytoplasmic; the sequence is AYDRFVAICHPLRYT. A helical transmembrane segment spans residues 134-154; it reads SIMTPHLCMSLVLVSWIASVL. An N-linked (GlcNAc...) asparagine glycan is attached at Asn155. Topologically, residues 155–196 are extracellular; sequence NSSLQSFLVLQLSFCTEVEIPHFFCELSMLVHLACSDTFLSD. The chain crosses the membrane as a helical span at residues 197–217; that stretch reads MAMNVLAALLGGGCLVGILYS. Over 218–244 the chain is Cytoplasmic; sequence YSKIVSSIQAISSAEGKYKAFSTCVSH. Residues 245–265 form a helical membrane-spanning segment; sequence LSVVSLFYCTLLGVYLSSAVT. The Extracellular segment spans residues 266-271; that stretch reads QNSHST. The helical transmembrane segment at 272 to 292 threads the bilayer; sequence AATSLMYTVVTPMLNPFIYSL. The Cytoplasmic portion of the chain corresponds to 293–311; that stretch reads RNDNIKRALKNFVKKKLEK.

The protein belongs to the G-protein coupled receptor 1 family. Tongue specific.

Its subcellular location is the cell membrane. In terms of biological role, possible taste receptor. The chain is Olfactory receptor 1073 (Olr1073) from Rattus norvegicus (Rat).